A 311-amino-acid polypeptide reads, in one-letter code: Pantothenate kinase (311 aa).

93–100 (GSVAVGKS) is an ATP binding site.

It belongs to the prokaryotic pantothenate kinase family.

It localises to the cytoplasm. The catalysed reaction is (R)-pantothenate + ATP = (R)-4'-phosphopantothenate + ADP + H(+). It functions in the pathway cofactor biosynthesis; coenzyme A biosynthesis; CoA from (R)-pantothenate: step 1/5. In Haemophilus influenzae (strain ATCC 51907 / DSM 11121 / KW20 / Rd), this protein is Pantothenate kinase (coaA).